The chain runs to 125 residues: Large ribosomal subunit protein eL31 (125 aa).

Belongs to the eukaryotic ribosomal protein eL31 family. Component of the large ribosomal subunit.

The protein localises to the cytoplasm. Functionally, component of the large ribosomal subunit. The ribosome is a large ribonucleoprotein complex responsible for the synthesis of proteins in the cell. The polypeptide is Large ribosomal subunit protein eL31 (rpl31) (Ictalurus punctatus (Channel catfish)).